A 371-amino-acid polypeptide reads, in one-letter code: MSRRRFDCRSISGLLTTTPQTPMKTENFNNFYTLTPKELGRGKFAVVRQCISKSTGQEYAAKFLKKRRRGQDCRAEILHEIAVLELARSCPHVINLHEVYETATEIILVLEYAAGGEIFNLCLPELAEMVSENDVIRLIKQILEGVHYLHQNNIVHLDLKPQNILLSSIYPLGDIKIVDFGMSRKIGNASELREIMGTPEYLAPEILNYDPITTATDMWNIGIIAYMLLTHTSPFVGEDNQETYLNISQVNVDYSEEMFSSVSQLATDFIQSLLVKNPEKRPTAESCLSHSWLQQWDFGSLFHPEETSESSQTQDLSLRSSEDKTPKSCNGSCGDREDKENIPEDDSLLSKRFRFDDSLPSPHELVPDLFC.

Residues 33 to 293 (TLTPKELGRG…AESCLSHSWL (261 aa)) enclose the Protein kinase domain. Residues 39–47 (LGRGKFAVV) and K62 contribute to the ATP site. The active-site Proton acceptor is D158. Residues 308 to 345 (SESSQTQDLSLRSSEDKTPKSCNGSCGDREDKENIPED) form a disordered region. Positions 309–319 (ESSQTQDLSLR) are enriched in polar residues.

This sequence belongs to the protein kinase superfamily. CAMK Ser/Thr protein kinase family. DAP kinase subfamily. In terms of assembly, interacts with CHP1; the interaction induces CHP1 to translocate from the Golgi to the nucleus. Autophosphorylated. As to expression, highly expressed in thymus, spleen, and testis, lower levels present in the brain.

Its subcellular location is the nucleus. It localises to the cell membrane. The protein resides in the endoplasmic reticulum-Golgi intermediate compartment. The catalysed reaction is L-seryl-[protein] + ATP = O-phospho-L-seryl-[protein] + ADP + H(+). It catalyses the reaction L-threonyl-[protein] + ATP = O-phospho-L-threonyl-[protein] + ADP + H(+). Acts as a positive regulator of apoptosis. Phosphorylates myosin light chains. This is Serine/threonine-protein kinase 17B (Stk17b) from Rattus norvegicus (Rat).